The primary structure comprises 363 residues: Flagellar P-ring protein (363 aa).

The signal sequence occupies residues 1–20 (MKYRLIVALAMLVLSLPSQA).

This sequence belongs to the FlgI family. As to quaternary structure, the basal body constitutes a major portion of the flagellar organelle and consists of four rings (L,P,S, and M) mounted on a central rod.

Its subcellular location is the periplasm. It is found in the bacterial flagellum basal body. Its function is as follows. Assembles around the rod to form the L-ring and probably protects the motor/basal body from shearing forces during rotation. This Shewanella sp. (strain ANA-3) protein is Flagellar P-ring protein.